The sequence spans 463 residues: Retinoic acid receptor RXR-gamma (463 aa).

The interval 1 to 138 (MYGNYSHFMK…TSPGSLVKHI (138 aa)) is modulating. A disordered region spans residues 16 to 53 (GGSPGHTGSTSMSPSVALPTGKPMDSHPSYTDTPVSAP). 2 NR C4-type zinc fingers span residues 139–159 (CAICGDRSSGKHYGVYSCEGC) and 175–199 (CRDNKDCLIDKRQRNRCQYCRYQKC). The nuclear receptor DNA-binding region spans 139 to 204 (CAICGDRSSG…RYQKCLVMGM (66 aa)). The interval 205–230 (KREAVQEERQRSRERAESEAECASTG) is hinge. The region spanning 231 to 459 (HEDMPVERIL…TFLMEMLETP (229 aa)) is the NR LBD domain.

Belongs to the nuclear hormone receptor family. NR2 subfamily. As to quaternary structure, homodimer. Heterodimer with a RAR molecule. Binds DNA preferentially as a RAR/RXR heterodimer. Interacts with RARA. Acetylated by EP300. As to expression, expressed in the liver, but not detected in the adrenal gland (at protein level). Restricted expression in adrenal gland, kidney, liver, brain and lungs. Strong expression in heart and muscles.

The protein localises to the nucleus. The protein resides in the cytoplasm. In terms of biological role, receptor for retinoic acid. Retinoic acid receptors bind as heterodimers to their target response elements in response to their ligands, all-trans or 9-cis retinoic acid, and regulate gene expression in various biological processes. The RAR/RXR heterodimers bind to the retinoic acid response elements (RARE) composed of tandem 5'-AGGTCA-3' sites known as DR1-DR5. The high affinity ligand for RXRs is 9-cis retinoic acid. This chain is Retinoic acid receptor RXR-gamma (Rxrg), found in Rattus norvegicus (Rat).